Consider the following 1224-residue polypeptide: Coatomer subunit alpha (1224 aa).

4 WD repeats span residues 7 to 37, 49 to 79, 91 to 121, and 133 to 163; these read TKSA…QLWD, EHDG…KVWN, GHLD…RVWN, and GHNH…RVWD. Ser-173 carries the post-translational modification Phosphoserine. Thr-185 is subject to Phosphothreonine. WD repeat units lie at residues 203-233 and 247-277; these read GHDR…KIWR and GHYN…RVWD. The residue at position 591 (Thr-591) is a Phosphothreonine. The residue at position 965 (Arg-965) is an Omega-N-methylarginine. At Ser-1193 the chain carries Phosphoserine.

As to quaternary structure, oligomeric complex that consists of at least the alpha, beta, beta', gamma, delta, epsilon and zeta subunits. Interacts with SCYL1. Interacts with JAGN1. Interacts with TMEM41B. Interacts with SVEP1. Probably interacts with PEX11A.

Its subcellular location is the cytoplasm. It localises to the golgi apparatus membrane. The protein resides in the cytoplasmic vesicle. The protein localises to the COPI-coated vesicle membrane. It is found in the secreted. The coatomer is a cytosolic protein complex that binds to dilysine motifs and reversibly associates with Golgi non-clathrin-coated vesicles, which further mediate biosynthetic protein transport from the ER, via the Golgi up to the trans Golgi network. Coatomer complex is required for budding from Golgi membranes, and is essential for the retrograde Golgi-to-ER transport of dilysine-tagged proteins. In mammals, the coatomer can only be recruited by membranes associated to ADP-ribosylation factors (ARFs), which are small GTP-binding proteins; the complex also influences the Golgi structural integrity, as well as the processing, activity, and endocytic recycling of LDL receptors. In terms of biological role, xenin stimulates exocrine pancreatic secretion. It inhibits pentagastrin-stimulated secretion of acid, to induce exocrine pancreatic secretion and to affect small and large intestinal motility. In the gut, xenin interacts with the neurotensin receptor. The sequence is that of Coatomer subunit alpha (COPA) from Bos taurus (Bovine).